Reading from the N-terminus, the 503-residue chain is Zinc finger protein JACKDAW (503 aa).

The segment covering 32-51 (IPDLNPNSNPNPNAKPNSSS) has biased composition (low complexity). Positions 32 to 68 (IPDLNPNSNPNPNAKPNSSSAKKKRNQPGTPDPDADV) are disordered. Phosphoserine is present on serine 72. 2 consecutive C2H2-type zinc fingers follow at residues 82-104 (FVCE…RRGH) and 124-154 (YICP…SRKH). 2 short sequence motifs (nuclear localization signal) span residues 100-107 (HRRGHNLP) and 146-153 (IKKHYSRK). The segment at 159-182 (WKCEKCSKKYAVQSDWKAHAKTCG) adopts a C2H2-type 2; degenerate zinc-finger fold. Residues cysteine 161, cysteine 164, histidine 177, cysteine 181, cysteine 188, cysteine 190, histidine 203, and cysteine 207 each contribute to the Zn(2+) site. The segment at 186–209 (YKCDCGTLFSRKDSFITHRAFCDA) adopts a CCHC-type 2; atypical zinc-finger fold. The SHR-binding stretch occupies residues 196 to 208 (RKDSFITHRAFCD). Disordered stretches follow at residues 301 to 417 (SSSS…SSPM) and 432 to 465 (RENH…LNPA). The segment covering 319–358 (TSTNPSLTLSSSSTSQQTSASLQHQTLKDSSFSPLFSSSS) has biased composition (low complexity). Residues 381-392 (MGSTRSNSSTAP) show a composition bias toward polar residues. Residues 396-407 (AGPTMTSSSATA) show a composition bias toward low complexity. Positions 444–465 (GVSTSSVDNNPFQSNRSGLNPA) are enriched in polar residues.

In terms of assembly, interacts with SHR, SCR, MGP and itself. The heterodimer with SHR involves its zinc fingers. Interacts with SIEL. Binds to RGA and SCL3 competitively in the nucleus. In terms of tissue distribution, expressed in the quiescent center, the ground tissue stem cells and to a lesser extent in mature cortex and endodermis cells.

It localises to the nucleus. In terms of biological role, transcription factor that, together with BIB, regulates tissue boundaries and asymmetric cell division by a rapid up-regulation of 'SCARECROW' (SCR), thus controlling the nuclear localization of 'SHORT-ROOT' (SHR) and restricting its action. Binds DNA via its zinc fingers. Recognizes and binds to SCL3 promoter sequence 5'-AGACAA-3' to promote its expression when in complex with RGA. Confines CYCD6 expression to the cortex-endodermis initial/daughter (CEI/CEID) tissues. Required for radial patterning and stem cell maintenance. Counteracted by 'MAGPIE' (MGP). Binds to the SCR and MGP promoter sequences. Controls position-dependent signals that regulate epidermal-cell-type patterning. In Arabidopsis thaliana (Mouse-ear cress), this protein is Zinc finger protein JACKDAW.